Here is a 2919-residue protein sequence, read N- to C-terminus: Cadherin EGF LAG seven-pass G-type receptor 2 (2919 aa).

A signal peptide spans 1 to 31 (MRSRAASAPLPTPLLPLLLLLLLLPPSPLLG). Residues 32 to 2380 (DQVGPCRSLG…GEILPLKTLT (2349 aa)) are Extracellular-facing. Residues 156-194 (LRAGEGSPEESLGGRRKRNVNTAPQFQPPSYQATVPENQ) are disordered. Over residues 175–194 (VNTAPQFQPPSYQATVPENQ) the composition is skewed to polar residues. Cadherin domains are found at residues 182–289 (QPPS…DPVF), 290–399 (EQQE…APQF), 400–505 (SEKR…APIF), 506–610 (VSTP…NPTF), 611–712 (TQPE…RPVF), 713–815 (QSSH…APQF), 816–921 (LRDS…PPVF), 922–1023 (EQDE…PPVL), and 1028–1146 (ILFN…SPLL). Residues Asn486, Asn557, and Asn701 are each glycosylated (N-linked (GlcNAc...) asparagine). N-linked (GlcNAc...) asparagine glycosylation is found at Asn1036, Asn1076, Asn1182, and Asn1212. The 59-residue stretch at 1228–1286 (DDNICLREPCENYMRCVSVLRFDSSAPFIASSSVLFRPIHPVGGLRCRCPPGFTGDYCE) folds into the EGF-like 1; atypical domain. An EGF-like 2; calcium-binding domain is found at 1288-1318 (EVDLCYSRPCGPHGRCRSREGGYTCLCLDGY). Disulfide bonds link Cys1292-Cys1303, Cys1297-Cys1312, Cys1314-Cys1323, Cys1332-Cys1343, Cys1337-Cys1353, and Cys1355-Cys1365. The EGF-like 3; calcium-binding domain maps to 1328–1366 (HSGRCTPGVCKNGGTCVNLLVGGFKCDCPSGDFEKPFCQ). The 205-residue stretch at 1367-1571 (VTTRSFPARS…IANNGTVPGC (205 aa)) folds into the Laminin G-like 1 domain. Residues Asn1501 and Asn1565 are each glycosylated (N-linked (GlcNAc...) asparagine). Cystine bridges form between Cys1545–Cys1571, Cys1578–Cys1589, Cys1583–Cys1598, and Cys1600–Cys1609. Residues 1574 to 1610 (KKIVCDSSICHNGGTCVNQWNAFSCECPLGFGGKSCA) form the EGF-like 4; calcium-binding domain. Asn1591 bears the (3R)-3-hydroxyasparagine mark. Positions 1614–1791 (ANPQRFLGSS…GESINVEPGC (178 aa)) constitute a Laminin G-like 2 domain. The N-linked (GlcNAc...) asparagine glycan is linked to Asn1741. Positions 1787-1829 (VEPGCSWPDPCDSNPCPTNSYCSNDWDSYSCSCVLGYYGDNCT) constitute an EGF-like 5; calcium-binding domain. Intrachain disulfides connect Cys1791–Cys1802, Cys1797–Cys1817, Cys1819–Cys1828, Cys1832–Cys1843, Cys1837–Cys1855, Cys1857–Cys1866, Cys1887–Cys1899, Cys1889–Cys1906, Cys1908–Cys1921, Cys1924–Cys1936, Cys1926–Cys1943, Cys1945–Cys1954, and Cys1957–Cys1969. Asn1827 is a glycosylation site (N-linked (GlcNAc...) asparagine). In terms of domain architecture, EGF-like 6; calcium-binding spans 1830–1867 (NVCDLNPCEHQSVCTRKPNTPHGYICECLPNYLGPYCE). An EGF-like 7; calcium-binding domain is found at 1883–1922 (TCGPCNCDVSKGFDPDCNKTSGECHCKENHYRPPGSPTCL). Asn1900 carries N-linked (GlcNAc...) asparagine glycosylation. Residues 1924-1971 (CDCYPTGSLSRVCDPEDGQCPCKPGVIGRQCDRCDNPFAEVTTNGCEV) enclose the Laminin EGF-like domain. Residues Asn2024, Asn2043, and Asn2061 are each glycosylated (N-linked (GlcNAc...) asparagine). The GAIN-B domain occupies 2199-2369 (ETTVILPESV…AVLMDMSRRE (171 aa)). Residues 2216-2241 (VRSAGPGEAQETEELARRQRRHPELS) are disordered. Disulfide bonds link Cys2319–Cys2351 and Cys2339–Cys2353. A GPS region spans residues 2319–2369 (CVFWNHSILVSGTGGWSARGCEVVFRNESHVSCQCNHMTSFAVLMDMSRRE). N-linked (GlcNAc...) asparagine glycosylation is found at Asn2323 and Asn2345. A helical transmembrane segment spans residues 2381-2401 (YVALGVTLAALMLTFLFLTLL). Residues 2402–2413 (RALRSNQHGIRR) lie on the Cytoplasmic side of the membrane. The chain crosses the membrane as a helical span at residues 2414-2433 (NLTAALGLAQLVFLLGINQA). The Extracellular portion of the chain corresponds to 2434-2438 (DLPFA). Residues 2439–2459 (CTVIAILLHFLYLCTFSWALL) traverse the membrane as a helical segment. The Cytoplasmic portion of the chain corresponds to 2460–2480 (EALHLYRALTEVRDVNASPMR). A helical transmembrane segment spans residues 2481–2501 (FYYMLGWGVPAFITGLAVGLD). Residues 2502–2518 (PEGYGNPDFCWLSVYDT) are Extracellular-facing. A helical transmembrane segment spans residues 2519–2539 (LIWSFAGPVAFAVSMSVFLYI). The Cytoplasmic segment spans residues 2540–2563 (LSARASCAAQRQGFEKKGPVSGLR). The helical transmembrane segment at 2564 to 2584 (SSFTVLLLLSATWLLALLSVN) threads the bilayer. The Extracellular segment spans residues 2585–2591 (SDTLLFH). Residues 2592–2612 (YLFAACNCVQGPFIFLSYVVL) form a helical membrane-spanning segment. At 2613-2919 (SKEVRKALKF…SEFLFFNFLH (307 aa)) the chain is on the cytoplasmic side. The segment at 2690-2884 (LNPGQVPPGL…PPRPPPRQSL (195 aa)) is disordered. Positions 2718–2730 (TDSDSDLSLEDDQ) are enriched in acidic residues. The span at 2791–2800 (GTTTKENSGS) shows a compositional bias: polar residues. Residues 2803–2815 (LEERPRENGDALT) are compositionally biased toward basic and acidic residues. Residues 2857–2868 (GTGSSRGSSISE) show a composition bias toward low complexity.

This sequence belongs to the G-protein coupled receptor 2 family. LN-TM7 subfamily. As to quaternary structure, heterodimer of 2 chains generated by proteolytic processing; the large extracellular N-terminal fragment and the membrane-bound C-terminal fragment predominantly remain associated and non-covalently linked. Post-translationally, the iron and 2-oxoglutarate dependent 3-hydroxylation of aspartate and asparagine is (R) stereospecific within EGF domains. Autoproteolytically processed at the GPS region of the GAIN-B domain; this cleavage modulates receptor activity. In terms of tissue distribution, expressed in the CNS and in the eye.

It is found in the cell membrane. In terms of biological role, receptor that may have an important role in cell/cell signaling during nervous system formation. The polypeptide is Cadherin EGF LAG seven-pass G-type receptor 2 (Mus musculus (Mouse)).